The following is a 657-amino-acid chain: Glycogen debranching enzyme (657 aa).

The active-site Nucleophile is Asp-336. The active-site Proton donor is Glu-371. Residues 458-467 are compositionally biased toward basic and acidic residues; that stretch reads NEANGEENRD. Positions 458 to 479 are disordered; that stretch reads NEANGEENRDGTNNNYSNNHGK.

This sequence belongs to the glycosyl hydrolase 13 family.

The catalysed reaction is Hydrolysis of (1-&gt;6)-alpha-D-glucosidic linkages to branches with degrees of polymerization of three or four glucose residues in limit dextrin.. The protein operates within glycan degradation; glycogen degradation. Removes maltotriose and maltotetraose chains that are attached by 1,6-alpha-linkage to the limit dextrin main chain, generating a debranched limit dextrin. This is Glycogen debranching enzyme from Shigella sonnei (strain Ss046).